A 430-amino-acid polypeptide reads, in one-letter code: Delta(14)-sterol reductase (430 aa).

Transmembrane regions (helical) follow at residues 12-32, 67-87, 109-129, 230-250, 267-287, and 290-310; these read IGTG…HFLI, LAVA…PAEI, FLVF…TWWF, FVSD…VDAL, LGVM…CLQA, and LASF…AVQF. Residues lysine 323, arginine 327, leucine 350, tryptophan 355, and 362–363 contribute to the NADP(+) site; that span reads NY. The next 2 helical transmembrane spans lie at 349–369 and 376–396; these read LLIS…DWIM and TTGF…ILLL. Residues aspartate 402, 406–410, and tyrosine 417 contribute to the NADP(+) site; that span reads CREKY.

The protein belongs to the ERG4/ERG24 family.

The protein localises to the membrane. The catalysed reaction is 4,4-dimethyl-5alpha-cholesta-8,24-dien-3beta-ol + NADP(+) = 4,4-dimethyl-5alpha-cholesta-8,14,24-trien-3beta-ol + NADPH + H(+). It functions in the pathway steroid biosynthesis; zymosterol biosynthesis; zymosterol from lanosterol: step 2/6. In terms of biological role, reduces the C14=C15 double bond of 4,4-dimethyl-cholesta-8,14,24-trienol to produce 4,4-dimethyl-cholesta-8,24-dienol. This chain is Delta(14)-sterol reductase (ERG3), found in Ascobolus immersus.